The following is a 266-amino-acid chain: GFP-like fluorescent chromoprotein cFP484 (266 aa).

A cross-link (2-iminomethyl-5-imidazolinone (Gln-Gly)) is located at residues 104 to 106; it reads QYG. Tyr105 carries the 2,3-didehydrotyrosine modification.

The protein belongs to the GFP family. Post-translationally, contains a chromophore consisting of modified amino acid residues. The chromophore is formed by autocatalytic backbone condensation between Xaa-N and Gly-(N+2), oxidation of Tyr-(N+1) to didehydrotyrosine, and formation of a double bond to the alpha-amino nitrogen of residue Xaa-N. Maturation of the chromophore requires nothing other than molecular oxygen. The precise stereochemistry of the tyrosine has not been determined. Tentacle and oral disk.

Its function is as follows. Pigment protein that is green in color. The chain is GFP-like fluorescent chromoprotein cFP484 from Clavularia sp. (Brown star polyp).